Consider the following 452-residue polypeptide: Mitochondrial import inner membrane translocase subunit TIM50 (452 aa).

A mitochondrion-targeting transit peptide spans 1-23 (MSLSKLTQTCFSRHQAKTFIRLY). Residues 24–167 (SSDFKSLLGP…RRKRMERNTR (144 aa)) are Mitochondrial matrix-facing. 2 disordered regions span residues 96–115 (IEAE…TSSA) and 130–153 (ESAA…GNAE). Residues 131–144 (SAASKSSSSSGGSS) show a composition bias toward low complexity. Residues 168-188 (IGAYVLFGGSIIGFISFCFYY) traverse the membrane as a helical segment. The Mitochondrial intermembrane portion of the chain corresponds to 189-452 (GRAQRDEFGN…LFGSRRHVNA (264 aa)). The 145-residue stretch at 243 to 387 (YLQPKYTIVI…VDLAELLKTI (145 aa)) folds into the FCP1 homology domain.

It belongs to the TIM50 family.

It is found in the mitochondrion inner membrane. Its function is as follows. Essential component of the TIM23 complex, a complex that mediates the translocation of transit peptide-containing proteins across the mitochondrial inner membrane. The protein is Mitochondrial import inner membrane translocase subunit TIM50 (scpl-4) of Caenorhabditis elegans.